We begin with the raw amino-acid sequence, 154 residues long: Large ribosomal subunit protein uL30 (154 aa).

Belongs to the universal ribosomal protein uL30 family. Part of the 50S ribosomal subunit.

This chain is Large ribosomal subunit protein uL30, found in Methanococcus maripaludis (strain C5 / ATCC BAA-1333).